The primary structure comprises 895 residues: uncharacterized protein (895 aa).

The tract at residues 257–283 is disordered; the sequence is KSHKYPPGPPDNSSSNTSGQQNTSNTS. Residues 268–283 are compositionally biased toward low complexity; sequence NSSSNTSGQQNTSNTS.

This is an uncharacterized protein from Acanthamoeba polyphaga mimivirus (APMV).